Here is a 127-residue protein sequence, read N- to C-terminus: uncharacterized protein (127 aa).

2 helical membrane passes run 42–62 and 78–98; these read LLISNFAGLGIAFIYCLIAFI and GLPIILCSTLMLVGNILYYFL.

It is found in the membrane. This is an uncharacterized protein from Schizosaccharomyces pombe (strain 972 / ATCC 24843) (Fission yeast).